The following is a 394-amino-acid chain: Chorismate synthase (394 aa).

2 residues coordinate NADP(+): arginine 42 and arginine 48. FMN is bound by residues 137–139 (RAS), 258–259 (QA), glycine 302, 317–321 (KPIAT), and arginine 343.

Belongs to the chorismate synthase family. In terms of assembly, homotetramer. FMNH2 is required as a cofactor.

The enzyme catalyses 5-O-(1-carboxyvinyl)-3-phosphoshikimate = chorismate + phosphate. It participates in metabolic intermediate biosynthesis; chorismate biosynthesis; chorismate from D-erythrose 4-phosphate and phosphoenolpyruvate: step 7/7. Catalyzes the anti-1,4-elimination of the C-3 phosphate and the C-6 proR hydrogen from 5-enolpyruvylshikimate-3-phosphate (EPSP) to yield chorismate, which is the branch point compound that serves as the starting substrate for the three terminal pathways of aromatic amino acid biosynthesis. This reaction introduces a second double bond into the aromatic ring system. In Streptomyces coelicolor (strain ATCC BAA-471 / A3(2) / M145), this protein is Chorismate synthase.